A 497-amino-acid polypeptide reads, in one-letter code: 3-octaprenyl-4-hydroxybenzoate carboxy-lyase (497 aa).

Mn(2+) is bound at residue N175. Prenylated FMN-binding positions include 178-180 (IYR), 192-194 (RWL), and 197-198 (RG). Residue E241 participates in Mn(2+) binding. Residue D290 is the Proton donor of the active site.

Belongs to the UbiD family. As to quaternary structure, homohexamer. Prenylated FMN serves as cofactor. It depends on Mn(2+) as a cofactor.

It localises to the cell membrane. The catalysed reaction is a 4-hydroxy-3-(all-trans-polyprenyl)benzoate + H(+) = a 2-(all-trans-polyprenyl)phenol + CO2. It participates in cofactor biosynthesis; ubiquinone biosynthesis. Its function is as follows. Catalyzes the decarboxylation of 3-octaprenyl-4-hydroxy benzoate to 2-octaprenylphenol, an intermediate step in ubiquinone biosynthesis. The chain is 3-octaprenyl-4-hydroxybenzoate carboxy-lyase from Escherichia coli O157:H7.